We begin with the raw amino-acid sequence, 405 residues long: Chalcone synthase (405 aa).

Cysteine 170 is a catalytic residue.

This sequence belongs to the thiolase-like superfamily. Chalcone/stilbene synthases family.

It carries out the reaction (E)-4-coumaroyl-CoA + 3 malonyl-CoA + 3 H(+) = 2',4,4',6'-tetrahydroxychalcone + 3 CO2 + 4 CoA. The protein operates within secondary metabolite biosynthesis; flavonoid biosynthesis. Functionally, the primary product of this enzyme is 4,2',4',6'-tetrahydroxychalcone (also termed naringenin-chalcone or chalcone) which can under specific conditions spontaneously isomerize into naringenin. This chain is Chalcone synthase (CHS), found in Equisetum arvense (Field horsetail).